Reading from the N-terminus, the 1020-residue chain is 5'-3' exoribonuclease 3 (1020 aa).

The segment at 113–144 is disordered; that stretch reads QQRSRRFRSAKDASDAAAEEERLREEFEREGR. Positions 121-144 are enriched in basic and acidic residues; it reads SAKDASDAAAEEERLREEFEREGR. A CCHC-type zinc finger spans residues 262–279; sequence ERCFLCGQMGHFASNCEG. Disordered regions lie at residues 411–440 and 452–483; these read QHQRQAERVKRDKAGKATKRMDDEAPTVQP and RLASAPTPSPFQSNDGRSAPHQKVRRLSPGSS. Positions 414–433 are enriched in basic and acidic residues; that stretch reads RQAERVKRDKAGKATKRMDD. Positions 487–523 form a coiled coil; it reads AIVDVENSLESDERENKEELKTKLKELIREKSDAFNS. The segment covering 831-844 has biased composition (low complexity); it reads NNHGMHNNHGMHNN. 3 disordered regions span residues 831–859, 875–897, and 911–1020; these read NNHGMHNNHGMHNNQGRQNPPGSVSGRHL, TDRYQTPTDVPAPGYGYNPPQYV, and PGAQ…RHRY. Composition is skewed to low complexity over residues 911–923 and 960–972; these read PGAQGYAQPAPYQ and GNHQNQHQQQQWH. Basic residues predominate over residues 1000 to 1020; sequence RGRGRGSHHHHDQGGNPRHRY.

The protein belongs to the 5'-3' exonuclease family. XRN2/RAT1 subfamily. Expressed in roots, leaves, stems and flowers.

Its subcellular location is the nucleus. Functionally, possesses 5'-&gt;3' exoribonuclease activity. Acts as an endogenous post-transcriptional gene silencing (PTGS) suppressor. Degrades miRNA-derived loops, excised during miRNA maturation in the nucleus. Required for proper development. Involved in pre-rRNA processing. Involved with XRN2 in the 5'-end exonucleolytic processing of 5.8S and 25S rRNAs. Contributes with XRN2 to polyadenylation-dependent nuclear RNA surveillance. Involved in the degradation of aberrant polyadenylated pre-rRNA through 5'-end processing. This is 5'-3' exoribonuclease 3 from Arabidopsis thaliana (Mouse-ear cress).